The chain runs to 169 residues: Photosystem I assembly protein Ycf3 (169 aa).

TPR repeat units lie at residues 35–68, 72–105, and 120–153; these read AFTYYRDGMSAQSEGEYAEALQNYYEAMRLETDP, SYILYNIGLVHTSNGEHTKALEYYFQALERNPSL, and GEQAIRQGDPETAEAWFDQAAEYWEQAIALAPGN.

The protein belongs to the Ycf3 family.

Its subcellular location is the plastid. It is found in the chloroplast thylakoid membrane. Its function is as follows. Essential for the assembly of the photosystem I (PSI) complex. May act as a chaperone-like factor to guide the assembly of the PSI subunits. The polypeptide is Photosystem I assembly protein Ycf3 (Pinus koraiensis (Korean pine)).